Consider the following 182-residue polypeptide: Bifunctional protein PyrR (182 aa).

Positions 99–111 (VVLVDDVLFTGRT) match the PRPP-binding motif.

The protein belongs to the purine/pyrimidine phosphoribosyltransferase family. PyrR subfamily.

The catalysed reaction is UMP + diphosphate = 5-phospho-alpha-D-ribose 1-diphosphate + uracil. Regulates the transcription of the pyrimidine nucleotide (pyr) operon in response to exogenous pyrimidines. Functionally, also displays a weak uracil phosphoribosyltransferase activity which is not physiologically significant. This chain is Bifunctional protein PyrR, found in Chloroflexus aurantiacus (strain ATCC 29366 / DSM 635 / J-10-fl).